A 187-amino-acid chain; its full sequence is MASPNRLIVAVTGLPGSGKSVVARIVAEELGLEVKVMGDVVREETVRRGLEPTPENVERVARMLREELGRAAVAKLLAERLEPGRSYVLDGLRSVEEAEVLARAGWRVFIIGVYAPRKQRLERLMRRRRSGETLWEVLELRDASNIELGVGEALALSDYLIVNTGSLEDLEFEARRAARVAICGGDP.

An ATP-binding site is contributed by 13–20; sequence GLPGSGKS.

The protein belongs to the UPF0200 family.

The sequence is that of UPF0200 protein APE_1753.1 from Aeropyrum pernix (strain ATCC 700893 / DSM 11879 / JCM 9820 / NBRC 100138 / K1).